The chain runs to 925 residues: Glutamate receptor 3.1 (925 aa).

A signal peptide spans 1–25; that stretch reads MLSSMNWVLLSFIIVLGGGLLLSEG. At 26–591 the chain is on the extracellular side; it reads ASSSRPPVIK…NPWAFLRPFT (566 aa). Residues N309, N341, N359, N419, N437, and N488 are each glycosylated (N-linked (GlcNAc...) asparagine). The helical transmembrane segment at 592–612 threads the bilayer; that stretch reads LPMWAVTASFFVIVGAAIWIL. At 613-621 the chain is on the cytoplasmic side; it reads EHRINDEFR. A helical membrane pass occupies residues 622–642; the sequence is GPPRRQIITILWFTFSTMFFS. Residues 643-653 are Cytoplasmic-facing; sequence HRETTVSTLGR. The helical transmembrane segment at 654 to 674 threads the bilayer; it reads MVLLIWLFVVLIITSSYTASL. At 675–831 the chain is on the extracellular side; sequence TSILTVQQLN…GDSEQLNVHS (157 aa). Residues N738 and N812 are each glycosylated (N-linked (GlcNAc...) asparagine). A helical membrane pass occupies residues 832-852; sequence FWGMFLVVGIACLVALFIHFF. Over 853–925 the chain is Cytoplasmic; sequence KIIRDFCKDT…ISRTASRRPI (73 aa). Residues 897-925 form a disordered region; the sequence is KRRLKRKRNNDHSMNANSIISRTASRRPI. Polar residues predominate over residues 908–919; the sequence is HSMNANSIISRT.

It belongs to the glutamate-gated ion channel (TC 1.A.10.1) family. In terms of assembly, may form heteromers. Expressed predominantly in roots. Firt detected in the vascular tissues of the cotyledons, and later in the vasculature of all organs. In leaves, preferentially expressed in guard cells.

It localises to the membrane. Its function is as follows. Glutamate-gated receptor that probably acts as a non-selective cation channel. May be involved in light-signal transduction and calcium homeostasis via the regulation of calcium influx into cells. Required for the long-term calcium oscillation-regulated stomatal movements. This chain is Glutamate receptor 3.1 (GLR3.1), found in Arabidopsis thaliana (Mouse-ear cress).